The primary structure comprises 464 residues: L-cystine uptake protein TcyP (464 aa).

10 consecutive transmembrane segments (helical) span residues 3 to 23, 34 to 54, 73 to 93, 107 to 127, 184 to 204, 225 to 245, 263 to 283, 347 to 367, 371 to 391, and 395 to 415; these read TLLV…LYYM, VFTA…IYEP, YVKL…ISAF, GLII…GIAA, PTST…FIGV, IVMR…LALM, FVLA…LLIA, AGIY…IDPL, FILT…GVGG, and FAAL…ALVI.

This sequence belongs to the dicarboxylate/amino acid:cation symporter (DAACS) (TC 2.A.23) family.

The protein resides in the membrane. Mediates uptake of L-cystine, the oxidized form of L-cysteine. The sequence is that of L-cystine uptake protein TcyP from Bacillus cereus (strain ATCC 14579 / DSM 31 / CCUG 7414 / JCM 2152 / NBRC 15305 / NCIMB 9373 / NCTC 2599 / NRRL B-3711).